The primary structure comprises 335 residues: HTH-type transcriptional regulator RipA (335 aa).

Residues 119 to 216 (RKVAQKLIAY…GDTPSSFTSP (98 aa)) form the HTH araC/xylS-type domain. 2 DNA-binding regions (H-T-H motif) span residues 136–157 (LEFAQLHNISSRTLQRQFVAST) and 183–206 (IGQVSQMVGFSATSSLTRAFKRHT).

Under iron limitation, represses the acn (aconitase), catA (catechol 1,2 dioxygenase), leuCD (isopropylmalate dehydratase), narKGHJI (nitrite/nitrate transporter and nitrate reductase), sdhCAB (succinate dehydrogenase), pta (phosphotransacetylase) and katA (catalase) genes. This chain is HTH-type transcriptional regulator RipA, found in Corynebacterium diphtheriae (strain ATCC 700971 / NCTC 13129 / Biotype gravis).